A 289-amino-acid polypeptide reads, in one-letter code: Putative transmembrane protein ORF111 (289 aa).

Transmembrane regions (helical) follow at residues 1–21 (MIGP…IFML), 112–132 (AIIT…VCIA), 151–171 (IGIT…FIVI), 189–209 (LNIS…TSIL), and 261–281 (YLLT…IGVG).

It localises to the host membrane. This is Putative transmembrane protein ORF111 from Ostreid herpesvirus 1 (isolate France) (OsHV-1).